We begin with the raw amino-acid sequence, 83 residues long: Exodeoxyribonuclease 7 small subunit (83 aa).

This sequence belongs to the XseB family. In terms of assembly, heterooligomer composed of large and small subunits.

It is found in the cytoplasm. The catalysed reaction is Exonucleolytic cleavage in either 5'- to 3'- or 3'- to 5'-direction to yield nucleoside 5'-phosphates.. Functionally, bidirectionally degrades single-stranded DNA into large acid-insoluble oligonucleotides, which are then degraded further into small acid-soluble oligonucleotides. The protein is Exodeoxyribonuclease 7 small subunit of Moorella thermoacetica (strain ATCC 39073 / JCM 9320).